We begin with the raw amino-acid sequence, 392 residues long: Chorismate synthase (392 aa).

Positions 39 and 45 each coordinate NADP(+). Residues 131 to 133 (RSS), 255 to 256 (NA), glycine 300, 315 to 319 (KPIPT), and arginine 341 contribute to the FMN site.

It belongs to the chorismate synthase family. In terms of assembly, homotetramer. Requires FMNH2 as cofactor.

The catalysed reaction is 5-O-(1-carboxyvinyl)-3-phosphoshikimate = chorismate + phosphate. Its pathway is metabolic intermediate biosynthesis; chorismate biosynthesis; chorismate from D-erythrose 4-phosphate and phosphoenolpyruvate: step 7/7. Catalyzes the anti-1,4-elimination of the C-3 phosphate and the C-6 proR hydrogen from 5-enolpyruvylshikimate-3-phosphate (EPSP) to yield chorismate, which is the branch point compound that serves as the starting substrate for the three terminal pathways of aromatic amino acid biosynthesis. This reaction introduces a second double bond into the aromatic ring system. The chain is Chorismate synthase from Leuconostoc mesenteroides subsp. mesenteroides (strain ATCC 8293 / DSM 20343 / BCRC 11652 / CCM 1803 / JCM 6124 / NCDO 523 / NBRC 100496 / NCIMB 8023 / NCTC 12954 / NRRL B-1118 / 37Y).